A 354-amino-acid polypeptide reads, in one-letter code: Uroporphyrinogen decarboxylase (354 aa).

Substrate-binding positions include 30–34 (RQAGR), aspartate 79, tyrosine 154, serine 209, and histidine 333.

It belongs to the uroporphyrinogen decarboxylase family. As to quaternary structure, homodimer.

It localises to the cytoplasm. It carries out the reaction uroporphyrinogen III + 4 H(+) = coproporphyrinogen III + 4 CO2. It participates in porphyrin-containing compound metabolism; protoporphyrin-IX biosynthesis; coproporphyrinogen-III from 5-aminolevulinate: step 4/4. Catalyzes the decarboxylation of four acetate groups of uroporphyrinogen-III to yield coproporphyrinogen-III. The chain is Uroporphyrinogen decarboxylase from Mycolicibacterium gilvum (strain PYR-GCK) (Mycobacterium gilvum (strain PYR-GCK)).